Here is a 72-residue protein sequence, read N- to C-terminus: Translation initiation factor IF-1 (72 aa).

The S1-like domain maps to 2–72 (AKEDCIEMQG…SKGRIIFRSR (71 aa)).

This sequence belongs to the IF-1 family. As to quaternary structure, component of the 30S ribosomal translation pre-initiation complex which assembles on the 30S ribosome in the order IF-2 and IF-3, IF-1 and N-formylmethionyl-tRNA(fMet); mRNA recruitment can occur at any time during PIC assembly.

Its subcellular location is the cytoplasm. In terms of biological role, one of the essential components for the initiation of protein synthesis. Stabilizes the binding of IF-2 and IF-3 on the 30S subunit to which N-formylmethionyl-tRNA(fMet) subsequently binds. Helps modulate mRNA selection, yielding the 30S pre-initiation complex (PIC). Upon addition of the 50S ribosomal subunit IF-1, IF-2 and IF-3 are released leaving the mature 70S translation initiation complex. In Haemophilus influenzae (strain ATCC 51907 / DSM 11121 / KW20 / Rd), this protein is Translation initiation factor IF-1.